The chain runs to 864 residues: Leucine--tRNA ligase (864 aa).

The 'HIGH' region signature appears at 42 to 52 (PYPSGKLHMGH). A 'KMSKS' region motif is present at residues 624–628 (KMSKS). K627 is a binding site for ATP.

It belongs to the class-I aminoacyl-tRNA synthetase family.

Its subcellular location is the cytoplasm. It catalyses the reaction tRNA(Leu) + L-leucine + ATP = L-leucyl-tRNA(Leu) + AMP + diphosphate. The sequence is that of Leucine--tRNA ligase from Burkholderia mallei (strain NCTC 10229).